The chain runs to 318 residues: Methionyl-tRNA formyltransferase (318 aa).

(6S)-5,6,7,8-tetrahydrofolate is bound at residue 112–115 (SILP).

It belongs to the Fmt family.

It catalyses the reaction L-methionyl-tRNA(fMet) + (6R)-10-formyltetrahydrofolate = N-formyl-L-methionyl-tRNA(fMet) + (6S)-5,6,7,8-tetrahydrofolate + H(+). Attaches a formyl group to the free amino group of methionyl-tRNA(fMet). The formyl group appears to play a dual role in the initiator identity of N-formylmethionyl-tRNA by promoting its recognition by IF2 and preventing the misappropriation of this tRNA by the elongation apparatus. The chain is Methionyl-tRNA formyltransferase from Shewanella baltica (strain OS223).